A 235-amino-acid polypeptide reads, in one-letter code: Probable ribonuclease P protein subunit 3 (235 aa).

The protein belongs to the eukaryotic/archaeal RNase P protein component 3 family.

It localises to the nucleus. It carries out the reaction Endonucleolytic cleavage of RNA, removing 5'-extranucleotides from tRNA precursor.. Its function is as follows. Part of ribonuclease P, a protein complex that generates mature tRNA molecules by cleaving their 5'-ends. The chain is Probable ribonuclease P protein subunit 3 from Schizosaccharomyces pombe (strain 972 / ATCC 24843) (Fission yeast).